A 259-amino-acid chain; its full sequence is Acetylglutamate kinase (259 aa).

Substrate is bound by residues 45-46, R67, and N159; that span reads GG.

The protein belongs to the acetylglutamate kinase family. ArgB subfamily.

The protein localises to the cytoplasm. It carries out the reaction N-acetyl-L-glutamate + ATP = N-acetyl-L-glutamyl 5-phosphate + ADP. It participates in amino-acid biosynthesis; L-arginine biosynthesis; N(2)-acetyl-L-ornithine from L-glutamate: step 2/4. Its function is as follows. Catalyzes the ATP-dependent phosphorylation of N-acetyl-L-glutamate. The chain is Acetylglutamate kinase from Aeromonas hydrophila subsp. hydrophila (strain ATCC 7966 / DSM 30187 / BCRC 13018 / CCUG 14551 / JCM 1027 / KCTC 2358 / NCIMB 9240 / NCTC 8049).